A 416-amino-acid polypeptide reads, in one-letter code: Cysteate synthase (416 aa).

Lys-104 bears the N6-(pyridoxal phosphate)lysine mark. Asn-130 is a binding site for pyridoxal 5'-phosphate.

It belongs to the threonine synthase family. Cysteate synthase subfamily. Homotrimer. Requires pyridoxal 5'-phosphate as cofactor.

The enzyme catalyses O-phospho-L-serine + sulfite + H(+) = L-cysteate + phosphate. Its pathway is cofactor biosynthesis; coenzyme M biosynthesis. With respect to regulation, is inhibited by AP3 (DL-2-amino-3-phosphonopropionate) and, to a lesser extent, by L-aspartate or AP4 (DL-2-amino-4-phosphonobutyrate). Is also inhibited by EDTA in vitro. Functionally, specifically catalyzes the beta-elimination of phosphate from L-phosphoserine and the beta-addition of sulfite to the dehydroalanine intermediate to produce L-cysteate. Does not display threonine synthase activity like the paralog protein ThrC. The polypeptide is Cysteate synthase (Methanosarcina acetivorans (strain ATCC 35395 / DSM 2834 / JCM 12185 / C2A)).